The sequence spans 3351 residues: Apolipophorins (3351 aa).

Residues 1–25 form the signal peptide; sequence MARMKYNIALIGILASVLLTIAVNA. The 599-residue stretch at 43–641 folds into the Vitellogenin domain; it reads YIPGNYYDYS…SQHGFLPRSS (599 aa). N67, N644, N1514, N1744, N1932, N1979, and N2822 each carry an N-linked (GlcNAc...) asparagine glycan. The VWFD domain maps to 2786–2952; it reads LRGHVVDGKH…DYGVGKCTAI (167 aa).

In terms of assembly, interacts with Nrx-1 (via cytoplasmic domain); the interaction supports apolpp/ApoLI protein stability. May be modified covalently by lipidation. In terms of processing, cleaved into 2 chains by furin protease. However, prevention of cleavage does not impair its function. As to expression, during stage 12, it is highly present throughout the yolk sac. By late stage 14, it localizes in the lateral fat body cells. Starting at stage 14, it localizes to the apodemes. Component of hemolymph clots (at protein level). Expressed in the amniosera. Expressed in rhabdomere of photoreceptor cells in retina (at protein level). In terms of tissue distribution, expressed in rhabdomere of photoreceptor cells in retina (at protein level). Expressed in simper cells as well as interphotoreceptor matrix (at protein level).

Its subcellular location is the secreted. The protein localises to the cell projection. The protein resides in the rhabdomere. In terms of biological role, constitutes the major component of lipophorin, which mediates transport for various types of lipids in hemolymph. Acts by forming lipoprotein particles that bind lipoproteins and lipids. Also involved in the transport of hydrophobic ligands like juvenile hormones, pheromone hydrocarbons and carotenoids. Required for morphogens wingless (wg) and hedgehog (hh) function, probably by acting as vehicles for the movement of wg and hh, explaining how covalently lipidated wg and hh can spread over long distances. May also be involved in transport and/or metabolism of heme. Involved in yolk granule formation. May be a component of yolk incorporated into yolk granules via yl/yolkless-mediated endocytosis and the endolysosomal pathway. This chain is Apolipophorins, found in Drosophila melanogaster (Fruit fly).